A 351-amino-acid polypeptide reads, in one-letter code: Sulfate/thiosulfate import ATP-binding protein CysA (351 aa).

An ABC transporter domain is found at 3 to 237; it reads ITVRNLHKRF…PRSAFVYEFL (235 aa). ATP is bound at residue 35-42; sequence GPSGCGKT.

It belongs to the ABC transporter superfamily. Sulfate/tungstate importer (TC 3.A.1.6) family. In terms of assembly, the complex is composed of two ATP-binding proteins (CysA), two transmembrane proteins (CysT and CysW) and a solute-binding protein (CysP).

Its subcellular location is the cell inner membrane. The catalysed reaction is sulfate(out) + ATP + H2O = sulfate(in) + ADP + phosphate + H(+). The enzyme catalyses thiosulfate(out) + ATP + H2O = thiosulfate(in) + ADP + phosphate + H(+). Functionally, part of the ABC transporter complex CysAWTP involved in sulfate/thiosulfate import. Responsible for energy coupling to the transport system. The chain is Sulfate/thiosulfate import ATP-binding protein CysA from Burkholderia pseudomallei (strain K96243).